Reading from the N-terminus, the 557-residue chain is Dihydroxy-acid dehydratase (557 aa).

Mg(2+) is bound at residue D78. C119 is a [2Fe-2S] cluster binding site. Residues D120 and K121 each coordinate Mg(2+). At K121 the chain carries N6-carboxylysine. Residue C194 participates in [2Fe-2S] cluster binding. E446 provides a ligand contact to Mg(2+). S472 functions as the Proton acceptor in the catalytic mechanism.

The protein belongs to the IlvD/Edd family. Homodimer. It depends on [2Fe-2S] cluster as a cofactor. Requires Mg(2+) as cofactor.

The enzyme catalyses (2R)-2,3-dihydroxy-3-methylbutanoate = 3-methyl-2-oxobutanoate + H2O. It catalyses the reaction (2R,3R)-2,3-dihydroxy-3-methylpentanoate = (S)-3-methyl-2-oxopentanoate + H2O. Its pathway is amino-acid biosynthesis; L-isoleucine biosynthesis; L-isoleucine from 2-oxobutanoate: step 3/4. It functions in the pathway amino-acid biosynthesis; L-valine biosynthesis; L-valine from pyruvate: step 3/4. Functions in the biosynthesis of branched-chain amino acids. Catalyzes the dehydration of (2R,3R)-2,3-dihydroxy-3-methylpentanoate (2,3-dihydroxy-3-methylvalerate) into 2-oxo-3-methylpentanoate (2-oxo-3-methylvalerate) and of (2R)-2,3-dihydroxy-3-methylbutanoate (2,3-dihydroxyisovalerate) into 2-oxo-3-methylbutanoate (2-oxoisovalerate), the penultimate precursor to L-isoleucine and L-valine, respectively. The chain is Dihydroxy-acid dehydratase from Desulfosudis oleivorans (strain DSM 6200 / JCM 39069 / Hxd3) (Desulfococcus oleovorans).